The chain runs to 189 residues: UPF0398 protein LGAS_1023 (189 aa).

The protein belongs to the UPF0398 family.

The protein is UPF0398 protein LGAS_1023 of Lactobacillus gasseri (strain ATCC 33323 / DSM 20243 / BCRC 14619 / CIP 102991 / JCM 1131 / KCTC 3163 / NCIMB 11718 / NCTC 13722 / AM63).